The chain runs to 128 residues: V-type proton ATPase subunit F (128 aa).

Belongs to the V-ATPase F subunit family. As to quaternary structure, V-ATPase is a heteromultimeric enzyme composed of a peripheral catalytic V1 complex (components A to H) attached to an integral membrane V0 proton pore complex (components: a, c, c'', d and e).

It localises to the vacuole membrane. Its function is as follows. Subunit of the peripheral V1 complex of vacuolar ATPase essential for assembly or catalytic function. V-ATPase is responsible for acidifying a variety of intracellular compartments in eukaryotic cells. The chain is V-type proton ATPase subunit F (VHA-F) from Arabidopsis thaliana (Mouse-ear cress).